The chain runs to 67 residues: Large ribosomal subunit protein bL35 (67 aa).

A disordered region spans residues 21–50 (KVMCGPGNKRHGLINRPQKMKRTNRGPQTM). Basic residues predominate over residues 28-44 (NKRHGLINRPQKMKRTN).

This sequence belongs to the bacterial ribosomal protein bL35 family.

This Gluconobacter oxydans (strain 621H) (Gluconobacter suboxydans) protein is Large ribosomal subunit protein bL35.